Consider the following 1088-residue polypeptide: ATP-dependent helicase/deoxyribonuclease subunit B (1088 aa).

Belongs to the helicase family. AddB/RexB type 2 subfamily. Heterodimer of AddA and RexB. It depends on Mg(2+) as a cofactor.

In terms of biological role, the heterodimer acts as both an ATP-dependent DNA helicase and an ATP-dependent, dual-direction single-stranded exonuclease. Recognizes the chi site generating a DNA molecule suitable for the initiation of homologous recombination. This subunit has 5' -&gt; 3' nuclease activity but not helicase activity. This Streptococcus suis (strain 98HAH33) protein is ATP-dependent helicase/deoxyribonuclease subunit B.